The following is a 375-amino-acid chain: Queuine tRNA-ribosyltransferase (375 aa).

Asp90 functions as the Proton acceptor in the catalytic mechanism. Residues 90-94 (DSGGF), Asp144, Gln193, and Gly220 each bind substrate. Residues 251-257 (GVGTPED) form an RNA binding region. Residue Asp270 is the Nucleophile of the active site. The interval 275–279 (TRNAR) is RNA binding; important for wobble base 34 recognition. Cys308, Cys310, Cys313, and His339 together coordinate Zn(2+).

The protein belongs to the queuine tRNA-ribosyltransferase family. As to quaternary structure, homodimer. Within each dimer, one monomer is responsible for RNA recognition and catalysis, while the other monomer binds to the replacement base PreQ1. Zn(2+) is required as a cofactor.

The catalysed reaction is 7-aminomethyl-7-carbaguanine + guanosine(34) in tRNA = 7-aminomethyl-7-carbaguanosine(34) in tRNA + guanine. The protein operates within tRNA modification; tRNA-queuosine biosynthesis. Its function is as follows. Catalyzes the base-exchange of a guanine (G) residue with the queuine precursor 7-aminomethyl-7-deazaguanine (PreQ1) at position 34 (anticodon wobble position) in tRNAs with GU(N) anticodons (tRNA-Asp, -Asn, -His and -Tyr). Catalysis occurs through a double-displacement mechanism. The nucleophile active site attacks the C1' of nucleotide 34 to detach the guanine base from the RNA, forming a covalent enzyme-RNA intermediate. The proton acceptor active site deprotonates the incoming PreQ1, allowing a nucleophilic attack on the C1' of the ribose to form the product. After dissociation, two additional enzymatic reactions on the tRNA convert PreQ1 to queuine (Q), resulting in the hypermodified nucleoside queuosine (7-(((4,5-cis-dihydroxy-2-cyclopenten-1-yl)amino)methyl)-7-deazaguanosine). The chain is Queuine tRNA-ribosyltransferase from Methylibium petroleiphilum (strain ATCC BAA-1232 / LMG 22953 / PM1).